A 254-amino-acid polypeptide reads, in one-letter code: Probable pectate lyase E (254 aa).

A signal peptide spans 1-17 (MYQPLLLLPLLLTSAFA). An N-linked (GlcNAc...) asparagine glycan is attached at Asn175. The segment at 227-254 (TDNNDKEPKKKGSGPSNACKYKEPLSKC) is disordered.

Belongs to the polysaccharide lyase 3 family. Ca(2+) serves as cofactor.

Its subcellular location is the secreted. It carries out the reaction Eliminative cleavage of (1-&gt;4)-alpha-D-galacturonan to give oligosaccharides with 4-deoxy-alpha-D-galact-4-enuronosyl groups at their non-reducing ends.. Its function is as follows. Pectinolytic enzyme consist of four classes of enzymes: pectin lyase, polygalacturonase, pectin methylesterase and rhamnogalacturonase. Among pectinolytic enzymes, pectin lyase is the most important in depolymerization of pectin, since it cleaves internal glycosidic bonds of highly methylated pectins. Favors pectate, the anion, over pectin, the methyl ester. The chain is Probable pectate lyase E (plyE) from Neosartorya fischeri (strain ATCC 1020 / DSM 3700 / CBS 544.65 / FGSC A1164 / JCM 1740 / NRRL 181 / WB 181) (Aspergillus fischerianus).